A 75-amino-acid polypeptide reads, in one-letter code: DNA-directed RNA polymerase subunit Rpo5 (75 aa).

This sequence belongs to the archaeal Rpo5/eukaryotic RPB5 RNA polymerase subunit family. In terms of assembly, part of the RNA polymerase complex.

Its subcellular location is the cytoplasm. The catalysed reaction is RNA(n) + a ribonucleoside 5'-triphosphate = RNA(n+1) + diphosphate. Functionally, DNA-dependent RNA polymerase (RNAP) catalyzes the transcription of DNA into RNA using the four ribonucleoside triphosphates as substrates. The chain is DNA-directed RNA polymerase subunit Rpo5 from Halobacterium salinarum (strain ATCC 700922 / JCM 11081 / NRC-1) (Halobacterium halobium).